A 305-amino-acid chain; its full sequence is Homoserine O-acetyltransferase (305 aa).

Residue Cys142 is the Acyl-thioester intermediate of the active site. 2 residues coordinate substrate: Lys163 and Ser192. His235 functions as the Proton acceptor in the catalytic mechanism. The active site involves Glu237. Residue Arg249 participates in substrate binding.

It belongs to the MetA family.

It is found in the cytoplasm. The enzyme catalyses L-homoserine + acetyl-CoA = O-acetyl-L-homoserine + CoA. The protein operates within amino-acid biosynthesis; L-methionine biosynthesis via de novo pathway; O-acetyl-L-homoserine from L-homoserine: step 1/1. Functionally, transfers an acetyl group from acetyl-CoA to L-homoserine, forming acetyl-L-homoserine. The sequence is that of Homoserine O-acetyltransferase from Acetivibrio thermocellus (strain ATCC 27405 / DSM 1237 / JCM 9322 / NBRC 103400 / NCIMB 10682 / NRRL B-4536 / VPI 7372) (Clostridium thermocellum).